We begin with the raw amino-acid sequence, 175 residues long: B9 domain-containing protein 2 (175 aa).

Positions 2-118 constitute a C2 B9-type domain; the sequence is AELHIIGQII…QCVTWRPLGS (117 aa).

The protein belongs to the B9D family. As to quaternary structure, part of the tectonic-like complex (also named B9 complex).

It is found in the cytoplasm. It localises to the cytoskeleton. The protein localises to the cilium basal body. The protein resides in the cilium axoneme. In terms of biological role, component of the tectonic-like complex, a complex localized at the transition zone of primary cilia and acting as a barrier that prevents diffusion of transmembrane proteins between the cilia and plasma membranes. The protein is B9 domain-containing protein 2 (b9d2) of Danio rerio (Zebrafish).